Consider the following 109-residue polypeptide: Nucleoid-associated protein Cvib_1034 (109 aa).

Belongs to the YbaB/EbfC family. In terms of assembly, homodimer.

Its subcellular location is the cytoplasm. It is found in the nucleoid. Binds to DNA and alters its conformation. May be involved in regulation of gene expression, nucleoid organization and DNA protection. The chain is Nucleoid-associated protein Cvib_1034 from Chlorobium phaeovibrioides (strain DSM 265 / 1930) (Prosthecochloris vibrioformis (strain DSM 265)).